Here is a 434-residue protein sequence, read N- to C-terminus: Trigger factor (434 aa).

One can recognise a PPIase FKBP-type domain in the interval 161-246 (KDIVTIDFKG…IHKVEEPQLP (86 aa)).

The protein belongs to the FKBP-type PPIase family. Tig subfamily.

The protein localises to the cytoplasm. It catalyses the reaction [protein]-peptidylproline (omega=180) = [protein]-peptidylproline (omega=0). Functionally, involved in protein export. Acts as a chaperone by maintaining the newly synthesized protein in an open conformation. Functions as a peptidyl-prolyl cis-trans isomerase. The chain is Trigger factor from Marinobacter nauticus (strain ATCC 700491 / DSM 11845 / VT8) (Marinobacter aquaeolei).